The following is a 339-amino-acid chain: Dihydroorotate dehydrogenase (quinone) (339 aa).

FMN contacts are provided by residues 62–66 (AGMDK) and Thr86. Residue Lys66 coordinates substrate. 111 to 115 (NRMGF) serves as a coordination point for substrate. Positions 139 and 172 each coordinate FMN. Asn172 contributes to the substrate binding site. Catalysis depends on Ser175, which acts as the Nucleophile. Residue Asn177 participates in substrate binding. Residues Lys217 and Thr245 each coordinate FMN. 246–247 (NT) is a substrate binding site. Residues Gly268, Gly297, and 318 to 319 (YS) contribute to the FMN site.

This sequence belongs to the dihydroorotate dehydrogenase family. Type 2 subfamily. As to quaternary structure, monomer. The cofactor is FMN.

It is found in the cell membrane. The catalysed reaction is (S)-dihydroorotate + a quinone = orotate + a quinol. The protein operates within pyrimidine metabolism; UMP biosynthesis via de novo pathway; orotate from (S)-dihydroorotate (quinone route): step 1/1. In terms of biological role, catalyzes the conversion of dihydroorotate to orotate with quinone as electron acceptor. This Shewanella baltica (strain OS185) protein is Dihydroorotate dehydrogenase (quinone).